Here is a 105-residue protein sequence, read N- to C-terminus: Integration host factor subunit alpha (105 aa).

It belongs to the bacterial histone-like protein family. As to quaternary structure, heterodimer of an alpha and a beta chain.

Its function is as follows. This protein is one of the two subunits of integration host factor, a specific DNA-binding protein that functions in genetic recombination as well as in transcriptional and translational control. This chain is Integration host factor subunit alpha, found in Azorhizobium caulinodans (strain ATCC 43989 / DSM 5975 / JCM 20966 / LMG 6465 / NBRC 14845 / NCIMB 13405 / ORS 571).